A 60-amino-acid chain; its full sequence is Cytotoxin 10 (60 aa).

4 disulfide bridges follow: cysteine 3–cysteine 21, cysteine 14–cysteine 38, cysteine 42–cysteine 53, and cysteine 54–cysteine 59.

This sequence belongs to the three-finger toxin family. Short-chain subfamily. Type IA cytotoxin sub-subfamily. Monomer in solution; Homodimer and oligomer in the presence of negatively charged lipids forming a pore with a size ranging between 20 and 30 Angstroms. Expressed by the venom gland.

Its subcellular location is the secreted. It is found in the target cell membrane. Shows cytolytic activity on many different cells by forming pore in lipid membranes. In vivo, increases heart rate or kills the animal by cardiac arrest. In addition, it binds to heparin with high affinity, interacts with Kv channel-interacting protein 1 (KCNIP1) in a calcium-independent manner, and binds to integrin alpha-V/beta-3 (ITGAV/ITGB3) with moderate affinity. The sequence is that of Cytotoxin 10 from Naja annulifera (Banded Egyptian cobra).